Reading from the N-terminus, the 125-residue chain is uncharacterized protein (125 aa).

Residues 96 to 113 (LFMMSIVSSYVCYITVLL) traverse the membrane as a helical segment.

It is found in the membrane. This is an uncharacterized protein from Saccharomyces cerevisiae (strain ATCC 204508 / S288c) (Baker's yeast).